We begin with the raw amino-acid sequence, 220 residues long: ATP synthase subunit 5, mitochondrial (220 aa).

It belongs to the ATPase delta chain family. F-type ATPases have 2 components, CF(1) - the catalytic core - and CF(0) - the membrane proton channel. CF(1) has five subunits: alpha(3), beta(3), gamma(1), delta(1), epsilon(1). CF(0) has three main subunits: a, b and c.

It is found in the mitochondrion. The protein localises to the mitochondrion inner membrane. Functionally, mitochondrial membrane ATP synthase (F(1)F(0) ATP synthase or Complex V) produces ATP from ADP in the presence of a proton gradient across the membrane which is generated by electron transport complexes of the respiratory chain. F-type ATPases consist of two structural domains, F(1) - containing the extramembraneous catalytic core and F(0) - containing the membrane proton channel, linked together by a central stalk and a peripheral stalk. During catalysis, ATP synthesis in the catalytic domain of F(1) is coupled via a rotary mechanism of the central stalk subunits to proton translocation. Part of the complex F(0) domain and the peripheric stalk, which acts as a stator to hold the catalytic alpha(3)beta(3) subcomplex and subunit a/ATP6 static relative to the rotary elements. This chain is ATP synthase subunit 5, mitochondrial (atp-5), found in Neurospora crassa (strain ATCC 24698 / 74-OR23-1A / CBS 708.71 / DSM 1257 / FGSC 987).